The following is a 269-amino-acid chain: ATP synthase subunit delta (269 aa).

It belongs to the ATPase delta chain family. In terms of assembly, F-type ATPases have 2 components, F(1) - the catalytic core - and F(0) - the membrane proton channel. F(1) has five subunits: alpha(3), beta(3), gamma(1), delta(1), epsilon(1). F(0) has three main subunits: a(1), b(2) and c(10-14). The alpha and beta chains form an alternating ring which encloses part of the gamma chain. F(1) is attached to F(0) by a central stalk formed by the gamma and epsilon chains, while a peripheral stalk is formed by the delta and b chains.

It is found in the cell membrane. Its function is as follows. F(1)F(0) ATP synthase produces ATP from ADP in the presence of a proton or sodium gradient. F-type ATPases consist of two structural domains, F(1) containing the extramembraneous catalytic core and F(0) containing the membrane proton channel, linked together by a central stalk and a peripheral stalk. During catalysis, ATP synthesis in the catalytic domain of F(1) is coupled via a rotary mechanism of the central stalk subunits to proton translocation. In terms of biological role, this protein is part of the stalk that links CF(0) to CF(1). It either transmits conformational changes from CF(0) to CF(1) or is implicated in proton conduction. The sequence is that of ATP synthase subunit delta from Thermobifida fusca (strain YX).